The chain runs to 111 residues: BET1-like protein (111 aa).

Topologically, residues 1–86 (MADWARAQSP…MARSGRDNRK (86 aa)) are cytoplasmic. Phosphoserine is present on residues S9 and S37. One can recognise a t-SNARE coiled-coil homology domain in the interval 15–77 (EILDRENKRM…TGSVKRFSTM (63 aa)). Residues 87 to 107 (LLCGMAVGLIVAFFILSYFLS) form a helical; Anchor for type IV membrane protein membrane-spanning segment. The Lumenal portion of the chain corresponds to 108–111 (RART).

In terms of assembly, component of a SNARE complex consisting of STX5, YKT6, GOSR1 and BET1L. Interacts with STX5.

The protein resides in the golgi apparatus membrane. It is found in the golgi apparatus. The protein localises to the trans-Golgi network membrane. Functionally, vesicle SNARE required for targeting and fusion of retrograde transport vesicles with the Golgi complex. Required for the integrity of the Golgi complex. The protein is BET1-like protein of Pongo abelii (Sumatran orangutan).